We begin with the raw amino-acid sequence, 610 residues long: Transducer of Cdc42-dependent actin assembly protein 2 homolog (610 aa).

Positions 1-267 (MIPVSRFFTV…EVGKIDAEGD (267 aa)) constitute an F-BAR domain. The disordered stretch occupies residues 283-315 (APFEIEDLGDPKNCDSRTNDSADGSGGKLLKSS). Basic and acidic residues predominate over residues 291–302 (GDPKNCDSRTND). An REM-1 domain is found at 352–429 (SKPAHVRLSC…IHNLKEFYAM (78 aa)). A coiled-coil region spans residues 355 to 385 (AHVRLSCLRSKIRDMEKQLEQAIQGREGITR). Disordered stretches follow at residues 436-487 (EGQE…SSKN) and 499-519 (LISS…RRAE). Positions 437-449 (GQERSFGGRDTPD) are enriched in basic and acidic residues. The segment covering 453 to 464 (SMSGSSTNQSSS) has biased composition (low complexity). The span at 475–487 (AGNSSSADDSSKN) shows a compositional bias: polar residues. The segment covering 501 to 513 (SSPKTSKSSTPTP) has biased composition (low complexity). Residues 547–610 (ETAVTVTALF…VPTSYLQFPQ (64 aa)) enclose the SH3 domain.

It belongs to the FNBP1 family. In terms of assembly, interacts (via SH3 domain) with wsp-1 and abi-1. Interacts with cdc-42 and (via SH3 domain) with wve-1.

Its subcellular location is the cell junction. The protein localises to the cell membrane. It localises to the cytoplasmic vesicle. The protein resides in the cytoplasm. It is found in the recycling endosome. Plays a role in protein trafficking, actin organization and embryonic morphogenesis. Potentially acts as a cdc-42 effector. May play a role in egg laying. Together with toca-1, is required for protein trafficking regulating yolk protein clathrin-mediated endocytosis by oocytes during oogenesis and retrograde recycling and the sorting of recycling endosome cargo proteins such as mig-14. Also, together with toca-2, controls the distribution of actin at cell junctions. This chain is Transducer of Cdc42-dependent actin assembly protein 2 homolog, found in Caenorhabditis elegans.